The sequence spans 466 residues: 23S rRNA (uracil(1939)-C(5))-methyltransferase RlmD (466 aa).

In terms of domain architecture, TRAM spans 11-69 (KITDTKHKEIVINRLDHLGAGIGHLNNKSIFVDGLLPGEKALVQITDDKKQYARAKVIK). The [4Fe-4S] cluster site is built by C82, C88, C91, and C184. Residues Q287, F316, N321, E337, N364, and D385 each coordinate S-adenosyl-L-methionine. C411 functions as the Nucleophile in the catalytic mechanism.

It belongs to the class I-like SAM-binding methyltransferase superfamily. RNA M5U methyltransferase family. RlmD subfamily.

The catalysed reaction is uridine(1939) in 23S rRNA + S-adenosyl-L-methionine = 5-methyluridine(1939) in 23S rRNA + S-adenosyl-L-homocysteine + H(+). In terms of biological role, catalyzes the formation of 5-methyl-uridine at position 1939 (m5U1939) in 23S rRNA. In Photobacterium profundum (strain SS9), this protein is 23S rRNA (uracil(1939)-C(5))-methyltransferase RlmD.